A 614-amino-acid polypeptide reads, in one-letter code: Glutamyl-tRNA(Gln) amidotransferase subunit E (614 aa).

This sequence belongs to the GatB/GatE family. GatE subfamily. Heterodimer of GatD and GatE.

The catalysed reaction is L-glutamyl-tRNA(Gln) + L-glutamine + ATP + H2O = L-glutaminyl-tRNA(Gln) + L-glutamate + ADP + phosphate + H(+). Functionally, allows the formation of correctly charged Gln-tRNA(Gln) through the transamidation of misacylated Glu-tRNA(Gln) in organisms which lack glutaminyl-tRNA synthetase. The reaction takes place in the presence of glutamine and ATP through an activated gamma-phospho-Glu-tRNA(Gln). The GatDE system is specific for glutamate and does not act on aspartate. This chain is Glutamyl-tRNA(Gln) amidotransferase subunit E, found in Methanospirillum hungatei JF-1 (strain ATCC 27890 / DSM 864 / NBRC 100397 / JF-1).